We begin with the raw amino-acid sequence, 427 residues long: 3-phosphoshikimate 1-carboxyvinyltransferase (427 aa).

3-phosphoshikimate-binding residues include K20, S21, and R25. K20 contacts phosphoenolpyruvate. Positions 92 and 120 each coordinate phosphoenolpyruvate. 3-phosphoshikimate contacts are provided by S166, Q168, D312, and K339. A phosphoenolpyruvate-binding site is contributed by Q168. The Proton acceptor role is filled by D312. R343 and R385 together coordinate phosphoenolpyruvate.

The protein belongs to the EPSP synthase family. In terms of assembly, monomer.

The protein localises to the cytoplasm. The catalysed reaction is 3-phosphoshikimate + phosphoenolpyruvate = 5-O-(1-carboxyvinyl)-3-phosphoshikimate + phosphate. It participates in metabolic intermediate biosynthesis; chorismate biosynthesis; chorismate from D-erythrose 4-phosphate and phosphoenolpyruvate: step 6/7. In terms of biological role, catalyzes the transfer of the enolpyruvyl moiety of phosphoenolpyruvate (PEP) to the 5-hydroxyl of shikimate-3-phosphate (S3P) to produce enolpyruvyl shikimate-3-phosphate and inorganic phosphate. The chain is 3-phosphoshikimate 1-carboxyvinyltransferase from Streptococcus pneumoniae (strain Hungary19A-6).